The chain runs to 369 residues: UPF0754 membrane protein Aflv_2299 (369 aa).

Transmembrane regions (helical) follow at residues 1 to 21 (MGLF…GGMT) and 347 to 367 (YLGA…TFFV).

Belongs to the UPF0754 family.

The protein localises to the cell membrane. This Anoxybacillus flavithermus (strain DSM 21510 / WK1) protein is UPF0754 membrane protein Aflv_2299.